Here is an 84-residue protein sequence, read N- to C-terminus: Cytochrome b559 subunit alpha (84 aa).

The chain crosses the membrane as a helical span at residues 22–36; that stretch reads IIHSITIPSLFVSGW. Histidine 24 serves as a coordination point for heme.

The protein belongs to the PsbE/PsbF family. In terms of assembly, heterodimer of an alpha subunit and a beta subunit. PSII is composed of 1 copy each of membrane proteins PsbA, PsbB, PsbC, PsbD, PsbE, PsbF, PsbH, PsbI, PsbJ, PsbK, PsbL, PsbM, PsbT, PsbX, PsbY, PsbZ, Psb30/Ycf12, at least 3 peripheral proteins of the oxygen-evolving complex and a large number of cofactors. It forms dimeric complexes. Heme b is required as a cofactor.

The protein localises to the plastid. The protein resides in the chloroplast thylakoid membrane. Its function is as follows. This b-type cytochrome is tightly associated with the reaction center of photosystem II (PSII). PSII is a light-driven water:plastoquinone oxidoreductase that uses light energy to abstract electrons from H(2)O, generating O(2) and a proton gradient subsequently used for ATP formation. It consists of a core antenna complex that captures photons, and an electron transfer chain that converts photonic excitation into a charge separation. This Phaeodactylum tricornutum (strain CCAP 1055/1) protein is Cytochrome b559 subunit alpha.